Reading from the N-terminus, the 312-residue chain is HTH-type transcriptional regulator MetR (312 aa).

One can recognise an HTH lysR-type domain in the interval 1-59 (MIEIKHLRTLQALKNNGSLSAAAIQLHQTQSAISHQFNELEKKLGFKLFIRKSNPIKFT). The H-T-H motif DNA-binding region spans 19–38 (LSAAAIQLHQTQSAISHQFN).

Belongs to the LysR transcriptional regulatory family.

It localises to the cytoplasm. Functionally, control of the last step in methionine biosynthesis; MetR is a positive activator of the metA, metE and metH genes. The polypeptide is HTH-type transcriptional regulator MetR (metR) (Buchnera aphidicola subsp. Schizaphis graminum (strain Sg)).